The sequence spans 435 residues: Methylenetetrahydrofolate--tRNA-(uracil-5-)-methyltransferase TrmFO (435 aa).

10–15 (GAGLAG) is a binding site for FAD.

The protein belongs to the MnmG family. TrmFO subfamily. It depends on FAD as a cofactor.

The protein resides in the cytoplasm. The enzyme catalyses uridine(54) in tRNA + (6R)-5,10-methylene-5,6,7,8-tetrahydrofolate + NADH + H(+) = 5-methyluridine(54) in tRNA + (6S)-5,6,7,8-tetrahydrofolate + NAD(+). The catalysed reaction is uridine(54) in tRNA + (6R)-5,10-methylene-5,6,7,8-tetrahydrofolate + NADPH + H(+) = 5-methyluridine(54) in tRNA + (6S)-5,6,7,8-tetrahydrofolate + NADP(+). In terms of biological role, catalyzes the folate-dependent formation of 5-methyl-uridine at position 54 (M-5-U54) in all tRNAs. The polypeptide is Methylenetetrahydrofolate--tRNA-(uracil-5-)-methyltransferase TrmFO (Bacillus velezensis (strain DSM 23117 / BGSC 10A6 / LMG 26770 / FZB42) (Bacillus amyloliquefaciens subsp. plantarum)).